The sequence spans 97 residues: UPF0147 protein MA_0092 (97 aa).

Belongs to the UPF0147 family.

This is UPF0147 protein MA_0092 from Methanosarcina acetivorans (strain ATCC 35395 / DSM 2834 / JCM 12185 / C2A).